Here is a 211-residue protein sequence, read N- to C-terminus: Large ribosomal subunit protein uL3 (211 aa).

The tract at residues 122 to 147 (AIKRHGQSRGPMAHGSRYHRRPGSMG) is disordered.

This sequence belongs to the universal ribosomal protein uL3 family. In terms of assembly, part of the 50S ribosomal subunit. Forms a cluster with proteins L14 and L19.

In terms of biological role, one of the primary rRNA binding proteins, it binds directly near the 3'-end of the 23S rRNA, where it nucleates assembly of the 50S subunit. In Geobacillus sp. (strain WCH70), this protein is Large ribosomal subunit protein uL3.